We begin with the raw amino-acid sequence, 151 residues long: Putative truncated GMC-type inactive oxidoreductase L893 (151 aa).

It belongs to the GMC oxidoreductase family.

Its subcellular location is the virion. In Acanthamoeba polyphaga (Amoeba), this protein is Putative truncated GMC-type inactive oxidoreductase L893.